Here is a 671-residue protein sequence, read N- to C-terminus: Probable potassium transport system protein Kup 2 (671 aa).

The next 12 helical transmembrane spans lie at 18–38 (GFLI…LYAM), 60–80 (VSLV…LIAL), 103–123 (WLIV…ALTP), 149–169 (VTTL…ASLV), 173–193 (FGPI…INSF), 218–238 (AGFF…ALYS), 252–272 (WPFV…WLLA), 292–312 (MVIY…QALI), 343–363 (LYIP…VLYF), 373–393 (YSLA…YFLI), 402–422 (IAFI…ASLV), and 424–444 (FING…VMFI).

The protein belongs to the HAK/KUP transporter (TC 2.A.72) family.

The protein localises to the cell membrane. It catalyses the reaction K(+)(in) + H(+)(in) = K(+)(out) + H(+)(out). Transport of potassium into the cell. Likely operates as a K(+):H(+) symporter. This is Probable potassium transport system protein Kup 2 from Lactococcus lactis subsp. cremoris (strain MG1363).